Here is a 254-residue protein sequence, read N- to C-terminus: UPF0246 protein FTM_0239 (254 aa).

This sequence belongs to the UPF0246 family.

The sequence is that of UPF0246 protein FTM_0239 from Francisella tularensis subsp. mediasiatica (strain FSC147).